Reading from the N-terminus, the 255-residue chain is tRNA (guanine-N(1)-)-methyltransferase (255 aa).

S-adenosyl-L-methionine-binding positions include G113 and 133–138 (IGDYVL).

It belongs to the RNA methyltransferase TrmD family. As to quaternary structure, homodimer.

It localises to the cytoplasm. It carries out the reaction guanosine(37) in tRNA + S-adenosyl-L-methionine = N(1)-methylguanosine(37) in tRNA + S-adenosyl-L-homocysteine + H(+). Specifically methylates guanosine-37 in various tRNAs. The protein is tRNA (guanine-N(1)-)-methyltransferase of Escherichia coli O81 (strain ED1a).